We begin with the raw amino-acid sequence, 485 residues long: Membrane-bound lytic murein transglycosylase F (485 aa).

Positions 1-29 (MFAHTALRQRCAKWLLATGLFLLLGACVE) are cleaved as a signal peptide. The segment at 30 to 267 (KPSTLERVKE…RLKDRYYGHV (238 aa)) is non-LT domain. The LT domain stretch occupies residues 268–485 (DVLGYVGAYT…DKPADKSSPM (218 aa)). Glu314 is an active-site residue. The disordered stretch occupies residues 465 to 485 (EGNLHVPGVNKDKPADKSSPM). Basic and acidic residues predominate over residues 474–485 (NKDKPADKSSPM).

In the N-terminal section; belongs to the bacterial solute-binding protein 3 family. It in the C-terminal section; belongs to the transglycosylase Slt family.

It localises to the cell outer membrane. It catalyses the reaction Exolytic cleavage of the (1-&gt;4)-beta-glycosidic linkage between N-acetylmuramic acid (MurNAc) and N-acetylglucosamine (GlcNAc) residues in peptidoglycan, from either the reducing or the non-reducing ends of the peptidoglycan chains, with concomitant formation of a 1,6-anhydrobond in the MurNAc residue.. Its function is as follows. Murein-degrading enzyme that degrades murein glycan strands and insoluble, high-molecular weight murein sacculi, with the concomitant formation of a 1,6-anhydromuramoyl product. Lytic transglycosylases (LTs) play an integral role in the metabolism of the peptidoglycan (PG) sacculus. Their lytic action creates space within the PG sacculus to allow for its expansion as well as for the insertion of various structures such as secretion systems and flagella. The protein is Membrane-bound lytic murein transglycosylase F of Pseudomonas putida (strain ATCC 47054 / DSM 6125 / CFBP 8728 / NCIMB 11950 / KT2440).